Consider the following 110-residue polypeptide: Late cornified envelope-like proline-rich protein 1 (110 aa).

Positions 1–24 (MSSDDKNKPGEPKNEPKQCDPGCE) are disordered.

It belongs to the cornifin (SPRR) family.

This Bos taurus (Bovine) protein is Late cornified envelope-like proline-rich protein 1 (LELP1).